Here is an 899-residue protein sequence, read N- to C-terminus: AP-3 complex subunit delta (899 aa).

HEAT repeat units lie at residues 37-74 (QSPE…KLTY), 155-192 (ELAR…QYPE), 194-229 (LRDN…HNPQ), 231-267 (FIQL…IEPK), 268-305 (LRVK…LNSD), 308-344 (DSAV…KINT), 345-382 (DFIA…EDNL), 384-428 (DFVQ…ITAM), 480-518 (RTLA…LLDN), 536-580 (ELQQ…LIIS), 590-613 (SEAL…SLPL), and 614-656 (LLTE…TESE). Disordered stretches follow at residues 668–701 (DGIV…PTHE), 741–768 (NLSN…KKKK), 782–801 (GVNT…SARN), and 849–899 (AAEE…LTTE). Low complexity predominate over residues 743 to 759 (SNSKPSSSGSLVRLSSE). A coiled-coil region spans residues 841–862 (QRLLDESAAAEEEVVVVKKKKR). Residues 857–880 (VKKKKRSKDGSKSSKKKSRSKSKP) are compositionally biased toward basic residues.

This sequence belongs to the adaptor complexes large subunit family. Adaptor protein complex 3 (AP-3) is a heterotetramer composed of 2 large adaptins (APL5 and APL6), a medium adaptin (APM3) and a small adaptin (APS3).

The protein localises to the golgi apparatus. The protein resides in the cytoplasmic vesicle. It localises to the clathrin-coated vesicle membrane. Its function is as follows. Part of the AP-3 complex, an adaptor-related complex which is not clathrin-associated. The complex is associated with the Golgi region as well as more peripheral structures. It facilitates the budding of vesicles from the Golgi membrane and may be directly involved in trafficking to the vacuole. In Eremothecium gossypii (strain ATCC 10895 / CBS 109.51 / FGSC 9923 / NRRL Y-1056) (Yeast), this protein is AP-3 complex subunit delta (APL5).